The chain runs to 453 residues: Signal transduction histidine-protein kinase ArlS (453 aa).

Helical transmembrane passes span 14–34 (ITTLIMFSTIILFCLVIIFFL) and 157–177 (FVAIAFGLLATFIMAGISYIF). The HAMP domain occupies 179-232 (TQLTKPLVTMSNKMIQIRRDGFQNKLELKTNYEETDNLIDTFNDMMYQIEESFN). Residues 240-453 (DASHELRTPL…QYTTFKIIFK (214 aa)) form the Histidine kinase domain. H243 carries the post-translational modification Phosphohistidine; by autocatalysis.

Autophosphorylated.

The protein resides in the cell membrane. It catalyses the reaction ATP + protein L-histidine = ADP + protein N-phospho-L-histidine.. In terms of biological role, member of the two-component regulatory system ArlS/ArlR. ArlS probably functions as a sensor protein kinase which is autophosphorylated at a histidine residue and transfers its phosphate group to ArlR. This Staphylococcus haemolyticus (strain JCSC1435) protein is Signal transduction histidine-protein kinase ArlS (arlS).